A 643-amino-acid chain; its full sequence is Protein ecdysoneless homolog (643 aa).

Disordered regions lie at residues 428–458 and 501–600; these read EFYN…NNFD and IESM…FTPV. Residues 446-456 are compositionally biased toward polar residues; sequence AGSSSDANMNN. Acidic residues predominate over residues 528–543; sequence MDFDDVEDDSEGEESN. Positions 564-580 are enriched in polar residues; that stretch reads NSTLEKSFENVNQQHSS. Residues 581-592 show a composition bias toward basic and acidic residues; the sequence is KQNEESSKTRDE.

Belongs to the ECD family.

This chain is Protein ecdysoneless homolog, found in Arabidopsis thaliana (Mouse-ear cress).